The primary structure comprises 414 residues: Multifunctional CCA protein (414 aa).

Gly8 and Arg11 together coordinate ATP. CTP-binding residues include Gly8 and Arg11. Residues Glu21 and Asp23 each contribute to the Mg(2+) site. ATP is bound by residues Arg91, Arg137, and Arg140. 3 residues coordinate CTP: Arg91, Arg137, and Arg140. The 102-residue stretch at 228 to 329 (TGIHTMMTVA…LKLFDAIDVW (102 aa)) folds into the HD domain.

The protein belongs to the tRNA nucleotidyltransferase/poly(A) polymerase family. Bacterial CCA-adding enzyme type 1 subfamily. As to quaternary structure, monomer. Can also form homodimers and oligomers. Mg(2+) is required as a cofactor. It depends on Ni(2+) as a cofactor.

The catalysed reaction is a tRNA precursor + 2 CTP + ATP = a tRNA with a 3' CCA end + 3 diphosphate. The enzyme catalyses a tRNA with a 3' CCA end + 2 CTP + ATP = a tRNA with a 3' CCACCA end + 3 diphosphate. Catalyzes the addition and repair of the essential 3'-terminal CCA sequence in tRNAs without using a nucleic acid template. Adds these three nucleotides in the order of C, C, and A to the tRNA nucleotide-73, using CTP and ATP as substrates and producing inorganic pyrophosphate. tRNA 3'-terminal CCA addition is required both for tRNA processing and repair. Also involved in tRNA surveillance by mediating tandem CCA addition to generate a CCACCA at the 3' terminus of unstable tRNAs. While stable tRNAs receive only 3'-terminal CCA, unstable tRNAs are marked with CCACCA and rapidly degraded. This is Multifunctional CCA protein from Pectobacterium carotovorum subsp. carotovorum (strain PC1).